Reading from the N-terminus, the 78-residue chain is RNA-binding protein Hfq (78 aa).

One can recognise a Sm domain in the interval Asp-10–Val-70.

The protein belongs to the Hfq family. Homohexamer.

In terms of biological role, RNA chaperone that binds small regulatory RNA (sRNAs) and mRNAs to facilitate mRNA translational regulation in response to envelope stress, environmental stress and changes in metabolite concentrations. Also binds with high specificity to tRNAs. This Brucella abortus (strain S19) protein is RNA-binding protein Hfq.